A 609-amino-acid chain; its full sequence is Chaperone protein DnaK (609 aa).

T172 bears the Phosphothreonine; by autocatalysis mark. The disordered stretch occupies residues 578–609 (QAQAQQQAGAGGAAKKDENVVDAEFEEVKDDK). Over residues 597 to 609 (VVDAEFEEVKDDK) the composition is skewed to acidic residues.

It belongs to the heat shock protein 70 family.

Acts as a chaperone. In Geobacillus sp. (strain WCH70), this protein is Chaperone protein DnaK.